The sequence spans 119 residues: Endocuticle structural glycoprotein SgAbd-3 (119 aa).

Glutamine 1 is subject to Pyrrolidone carboxylic acid. Positions 24 to 98 (DGSYRYSFET…PQGAHLPTPP (75 aa)) constitute a Chitin-binding type R&amp;R domain. The segment at 33–55 (TSDGQRASQEGALKQVSAPGPDG) is disordered. Threonine 96 is a glycosylation site (O-linked (HexNAc...) threonine).

Its function is as follows. Component of the abdominal endocuticle. The sequence is that of Endocuticle structural glycoprotein SgAbd-3 from Schistocerca gregaria (Desert locust).